The chain runs to 671 residues: Tail sheath protein (671 aa).

It belongs to the myoviridae tail sheath protein family. In terms of assembly, homomultimer.

Its subcellular location is the virion. The protein resides in the host cytoplasm. Polymerizes as an extended structure around the baseplate-tail tube complex. During ejection, the sheath shifts to a contracted form, thereby making the inner tail tube protrude through the host cell envelope. The protein is Tail sheath protein of Vibrio phage KVP40 (isolate Vibrio parahaemolyticus/Japan/Matsuzaki/1991) (KVP40).